A 283-amino-acid polypeptide reads, in one-letter code: Thymidylate synthase (283 aa).

Residue Arg22 coordinates dUMP. Cys160 serves as the catalytic Nucleophile. Residues 180–183 (RSCD), Asn191, and 221–223 (HIY) contribute to the dUMP site. Asp183 provides a ligand contact to (6R)-5,10-methylene-5,6,7,8-tetrahydrofolate. Ser282 contributes to the (6R)-5,10-methylene-5,6,7,8-tetrahydrofolate binding site.

Belongs to the thymidylate synthase family. Bacterial-type ThyA subfamily. Homodimer.

The protein localises to the cytoplasm. The catalysed reaction is dUMP + (6R)-5,10-methylene-5,6,7,8-tetrahydrofolate = 7,8-dihydrofolate + dTMP. The protein operates within pyrimidine metabolism; dTTP biosynthesis. Catalyzes the reductive methylation of 2'-deoxyuridine-5'-monophosphate (dUMP) to 2'-deoxythymidine-5'-monophosphate (dTMP) while utilizing 5,10-methylenetetrahydrofolate (mTHF) as the methyl donor and reductant in the reaction, yielding dihydrofolate (DHF) as a by-product. This enzymatic reaction provides an intracellular de novo source of dTMP, an essential precursor for DNA biosynthesis. In Vibrio parahaemolyticus serotype O3:K6 (strain RIMD 2210633), this protein is Thymidylate synthase.